The sequence spans 312 residues: Protoheme IX farnesyltransferase 1 (312 aa).

9 helical membrane passes run 21-41 (GVLA…LLVT), 53-73 (IPSP…AGSA), 105-125 (SALV…ALGA), 127-147 (LLAA…YTLV), 156-176 (IVWG…AVTG), 182-202 (ALVM…SLAM), 225-245 (VSAR…LLVP), 246-266 (ATSW…LIVA), and 292-312 (LALL…SFVA).

Belongs to the UbiA prenyltransferase family. Protoheme IX farnesyltransferase subfamily.

It is found in the cell membrane. It carries out the reaction heme b + (2E,6E)-farnesyl diphosphate + H2O = Fe(II)-heme o + diphosphate. Its pathway is porphyrin-containing compound metabolism; heme O biosynthesis; heme O from protoheme: step 1/1. In terms of biological role, converts heme B (protoheme IX) to heme O by substitution of the vinyl group on carbon 2 of heme B porphyrin ring with a hydroxyethyl farnesyl side group. The protein is Protoheme IX farnesyltransferase 1 of Saccharopolyspora erythraea (strain ATCC 11635 / DSM 40517 / JCM 4748 / NBRC 13426 / NCIMB 8594 / NRRL 2338).